A 748-amino-acid polypeptide reads, in one-letter code: Phosphoenolpyruvate-dependent phosphotransferase system (748 aa).

The region spanning 1 to 127 (MLTRLREIVE…RRQLLGVLVV (127 aa)) is the GAF domain. A linker region spans residues 128-170 (QQRELRQYDESEESFLVTLATQMAAILSQSQVTALFGQYRQTR). The tract at residues 171–748 (IRALPAAPGV…GMGGLIRGGL (578 aa)) is PTS EI. The active-site Tele-phosphohistidine intermediate is the His356. Positions 462 and 498 each coordinate phosphoenolpyruvate. Mg(2+) contacts are provided by Glu597 and Asp621. Phosphoenolpyruvate contacts are provided by residues 620–621 (ND) and Arg631. Catalysis depends on Cys668, which acts as the Proton donor.

The protein belongs to the PEP-utilizing enzyme family. Mg(2+) serves as cofactor.

It localises to the cytoplasm. The catalysed reaction is L-histidyl-[protein] + phosphoenolpyruvate = N(pros)-phospho-L-histidyl-[protein] + pyruvate. Its function is as follows. Component of the phosphoenolpyruvate-dependent nitrogen-metabolic phosphotransferase system (nitrogen-metabolic PTS), that seems to be involved in regulating nitrogen metabolism. Enzyme I-Ntr transfers the phosphoryl group from phosphoenolpyruvate (PEP) to the phosphoryl carrier protein (NPr). Could function in the transcriptional regulation of sigma-54 dependent operons in conjunction with the NPr (PtsO) and EIIA-Ntr (PtsN) proteins. Enzyme I-Ntr is specific for NPr. This Salmonella typhimurium (strain LT2 / SGSC1412 / ATCC 700720) protein is Phosphoenolpyruvate-dependent phosphotransferase system (ptsP).